We begin with the raw amino-acid sequence, 239 residues long: Norbelladine 4'-O-methyltransferase 4 (239 aa).

S-adenosyl-L-methionine is bound by residues valine 55, glutamate 77, 79–80 (GV), serine 85, aspartate 103, and alanine 132. Aspartate 155 is an a divalent metal cation binding site. Aspartate 157 serves as a coordination point for S-adenosyl-L-methionine. A divalent metal cation contacts are provided by aspartate 181 and asparagine 182.

This sequence belongs to the class I-like SAM-binding methyltransferase superfamily. Cation-dependent O-methyltransferase family. Mg(2+) is required as a cofactor.

The catalysed reaction is norbelladine + S-adenosyl-L-methionine = 4'-O-methylnorbelladine + S-adenosyl-L-homocysteine + H(+). It functions in the pathway alkaloid biosynthesis. Its function is as follows. 4'-O-methyltransferase converting norbelladine to 4'-O-methylnorbelladine. 4'-O-methylnorbelladine is a precursor to all Amaryllidaceae alkaloids such as galanthamine, lycorine and haemanthamine, and including haemanthamine- and crinamine-type alkaloids, promising anticancer agents. In Narcissus aff. pseudonarcissus MK-2014 (Daffodil), this protein is Norbelladine 4'-O-methyltransferase 4.